The primary structure comprises 134 residues: MKLAVVFLLTTVVFTLAQSQCENCADLQCNSTVHCCLVSTVRLPRWKREISRCGRLAIRRWRCEEPNSNGIYNRNCPCVPGLECREFRRGRRICLPEQSSTSTSSTQGPITSSTVTTQSEATTETETTTAAEGK.

The signal sequence occupies residues 1–19 (MKLAVVFLLTTVVFTLAQS). 3 disulfide bridges follow: C24–C35, C29–C53, and C63–C84. Positions 97-134 (EQSSTSTSSTQGPITSSTVTTQSEATTETETTTAAEGK) are disordered. Over residues 99–134 (SSTSTSSTQGPITSSTVTTQSEATTETETTTAAEGK) the composition is skewed to low complexity.

This sequence belongs to the neurotoxin 32 family. As to expression, expressed by the venom gland.

The protein resides in the secreted. This chain is U34-theraphotoxin-Cg1a, found in Chilobrachys guangxiensis (Chinese earth tiger tarantula).